The sequence spans 291 residues: Ribosomal RNA small subunit methyltransferase H (291 aa).

S-adenosyl-L-methionine contacts are provided by residues 31-33, D49, F76, D97, and Q104; that span reads GGY.

It belongs to the methyltransferase superfamily. RsmH family.

The protein resides in the cytoplasm. The catalysed reaction is cytidine(1402) in 16S rRNA + S-adenosyl-L-methionine = N(4)-methylcytidine(1402) in 16S rRNA + S-adenosyl-L-homocysteine + H(+). Functionally, specifically methylates the N4 position of cytidine in position 1402 (C1402) of 16S rRNA. The chain is Ribosomal RNA small subunit methyltransferase H from Anaplasma marginale (strain Florida).